Here is a 244-residue protein sequence, read N- to C-terminus: tRNA pseudouridine synthase B (244 aa).

Asp46 serves as the catalytic Nucleophile.

Belongs to the pseudouridine synthase TruB family. Type 1 subfamily.

It catalyses the reaction uridine(55) in tRNA = pseudouridine(55) in tRNA. Its function is as follows. Responsible for synthesis of pseudouridine from uracil-55 in the psi GC loop of transfer RNAs. The sequence is that of tRNA pseudouridine synthase B from Bordetella bronchiseptica (strain ATCC BAA-588 / NCTC 13252 / RB50) (Alcaligenes bronchisepticus).